The following is a 681-amino-acid chain: Envelope glycoprotein (681 aa).

The N-terminal stretch at 1–18 (MKTTCFLISLILIQGTKN) is a signal peptide. Residues 19–648 (LPILEIASNN…GLGGKWWTSD (630 aa)) are Extracellular-facing. 5 disulfide bridges follow: Cys37–Cys610, Cys92–Cys119, Cys211–Cys226, Cys512–Cys557, and Cys602–Cys609. A receptor-binding region spans residues 38–188 (SGTLQKTEDV…FSRQGQGYRH (151 aa)). 8 N-linked (GlcNAc...) asparagine; by host glycosylation sites follow: Asn94, Asn171, Asn190, Asn202, Asn207, Asn219, Asn223, and Asn255. The interval 223–427 (NQTCAPSKIP…PPTPSSTAQH (205 aa)) is disordered. Polar residues-rich tracts occupy residues 244-259 (LTST…TTDP), 281-290 (TSDAVTKQGL), and 308-318 (GGNNTNHSQDA). The mucin-like region stretch occupies residues 277–455 (EPHTTSDAVT…PFLDGLINAP (179 aa)). Asn310, Asn313, Asn325, Asn326, Asn337, Asn344, Asn345, Asn350, Asn360, Asn408, and Asn487 each carry an N-linked (GlcNAc...) asparagine; by host glycan. Residues 337–347 (NTTTISTNNTS) show a composition bias toward low complexity. The span at 348 to 414 (KHNFSTLSAP…TAPNTTNEHF (67 aa)) shows a compositional bias: polar residues. Residues 529-549 (GLSWIPFFGPGIEGLYTAVLI) are fusion peptide. The N-linked (GlcNAc...) asparagine; by host glycan is linked to Asn564. The N-linked (GlcNAc...) asparagine; by host glycan is linked to Asn619. The helical transmembrane segment at 649–669 (WGVLTNLGILLLLSIAVLIAL) threads the bilayer. Topologically, residues 670–681 (SCICRIFTKYIG) are cytoplasmic. 2 S-palmitoyl cysteine; by host lipidation sites follow: Cys671 and Cys673.

The protein belongs to the filoviruses glycoprotein family. Homotrimer; each monomer consists of a GP1 and a GP2 subunit linked by disulfide bonds. The resulting peplomers (GP1,2) protrude from the virus surface as spikes. GP1,2 interacts with human CD209 and CLEC4M (collectively referred to as DC-SIGN(R)). Asialoglycoprotein receptor (ASGP-R) may be a liver-specific receptor for GP1,2. Members of the Tyro3 receptor tyrosine kinase family may be cell entry factors interacting with GP1,2. Post-translationally, N-glycosylated. O-glycosylated in the mucin-like region. In terms of processing, specific enzymatic cleavages in vivo yield mature proteins. The precursor is processed into GP1 and GP2 by host cell furin in the trans Golgi, and maybe by other host proteases, to yield the mature GP1 and GP2 proteins. The cleavage site corresponds to the furin optimal cleavage sequence [KR]-X-[KR]-R. Post-translationally, GP1 is phosphorylated on serine residues between residues 260 and 273.

It localises to the virion membrane. It is found in the host cell membrane. In terms of biological role, GP1 is responsible for binding to the receptor(s) on target cells. Interacts with CD209/DC-SIGN and CLEC4M/DC-SIGNR which act as cofactors for virus entry into the host cell. Binding to CD209 and CLEC4M, which are respectively found on dendritic cells (DCs), and on endothelial cells of liver sinusoids and lymph node sinuses, facilitate infection of macrophages and endothelial cells. These interactions not only facilitate virus cell entry, but also allow capture of viral particles by DCs and subsequent transmission to susceptible cells without DCs infection (trans infection). GP2 acts as a class I viral fusion protein. Under the current model, the protein has at least 3 conformational states: pre-fusion native state, pre-hairpin intermediate state, and post-fusion hairpin state. During viral and target cell membrane fusion, the coiled coil regions (heptad repeats) assume a trimer-of-hairpins structure, positioning the fusion peptide in close proximity to the C-terminal region of the ectodomain. The formation of this structure appears to drive apposition and subsequent fusion of viral and target cell membranes. Responsible for penetration of the virus into the cell cytoplasm by mediating the fusion of the membrane of the endocytosed virus particle with the endosomal membrane. Low pH in endosomes induces an irreversible conformational change in GP2, releasing the fusion hydrophobic peptide. This is Envelope glycoprotein (GP) from Lake Victoria marburgvirus (strain Musoke-80) (MARV).